The chain runs to 159 residues: Ubiquitin-conjugating enzyme E2 variant 1B (159 aa).

In terms of domain architecture, UBC core spans 11 to 159 (PRNFRLLEEL…KGLVVKCCVM (149 aa)).

This sequence belongs to the ubiquitin-conjugating enzyme family. Heterodimer with UBC35 or UBC36. As to expression, expressed in roots, shoots, leaves, stems and flowers, but not in pollen.

Its function is as follows. Has no ubiquitin ligase activity on its own. The heterodimer with UBC catalyzes the synthesis of non-canonical poly-ubiquitin chains that are linked through 'Lys-63'. This type of poly-ubiquitination does not lead to protein degradation by the proteasome. Mediates transcriptional activation of target genes. May play a role in the control of progress through the cell cycle and differentiation. May play a role in the error-free DNA repair pathway and contributes to the survival of cells after DNA damage. The protein is Ubiquitin-conjugating enzyme E2 variant 1B (UEV1B) of Arabidopsis thaliana (Mouse-ear cress).